The chain runs to 454 residues: Phenylalanine--tRNA ligase, mitochondrial (454 aa).

Residues 141–144 (SAHQ), Arg-163, 170–172 (VHY), 177–179 (QME), Glu-266, and Phe-291 each bind substrate. The interval 327-347 (KSISTSSSSSSSSSSSSSSTL) is disordered. Positions 328–347 (SISTSSSSSSSSSSSSSSTL) are enriched in low complexity. Residues 361–454 (SKYPSCFKDV…LENHLSVKLR (94 aa)) enclose the FDX-ACB domain.

Belongs to the class-II aminoacyl-tRNA synthetase family. As to quaternary structure, monomer.

It localises to the mitochondrion matrix. The enzyme catalyses tRNA(Phe) + L-phenylalanine + ATP = L-phenylalanyl-tRNA(Phe) + AMP + diphosphate + H(+). In terms of biological role, is responsible for the charging of tRNA(Phe) with phenylalanine in mitochondrial translation. In Dictyostelium discoideum (Social amoeba), this protein is Phenylalanine--tRNA ligase, mitochondrial (mpheS).